Here is a 131-residue protein sequence, read N- to C-terminus: ATP synthase epsilon chain (131 aa).

It belongs to the ATPase epsilon chain family. In terms of assembly, F-type ATPases have 2 components, CF(1) - the catalytic core - and CF(0) - the membrane proton channel. CF(1) has five subunits: alpha(3), beta(3), gamma(1), delta(1), epsilon(1). CF(0) has three main subunits: a, b and c.

Its subcellular location is the cell membrane. Its function is as follows. Produces ATP from ADP in the presence of a proton gradient across the membrane. The sequence is that of ATP synthase epsilon chain from Bacillus pumilus (strain SAFR-032).